An 848-amino-acid polypeptide reads, in one-letter code: Trimethylamine-N-oxide reductase 1 (848 aa).

The segment at residues 1-39 is a signal peptide (tat-type signal); the sequence is MNNNDLFQASRRRFLAQLGGLTVAGMLGPSLLTSRRATA. S191 lines the Mo-bis(molybdopterin guanine dinucleotide) pocket.

It belongs to the prokaryotic molybdopterin-containing oxidoreductase family. Interacts with the N-terminal domain of TorC. Mo-bis(molybdopterin guanine dinucleotide) serves as cofactor. Post-translationally, predicted to be exported by the Tat system. The position of the signal peptide cleavage has not been experimentally proven.

The protein resides in the periplasm. It catalyses the reaction trimethylamine + 2 Fe(III)-[cytochrome c] + H2O = trimethylamine N-oxide + 2 Fe(II)-[cytochrome c] + 3 H(+). Functionally, reduces trimethylamine-N-oxide (TMAO) into trimethylamine; an anaerobic reaction coupled to energy-yielding reactions. The chain is Trimethylamine-N-oxide reductase 1 (torA) from Escherichia coli O157:H7.